A 681-amino-acid polypeptide reads, in one-letter code: Translation factor GUF1 homolog, chloroplastic (681 aa).

The N-terminal 51 residues, 1–51 (MAMASAMDLSSPPTFFLSGTSTSSPSLRRLSSISVSGFRRHSNRKLQILCQ), are a transit peptide targeting the chloroplast. Residues 84–265 (SNIRNFSIIA…AIVQRIPAPL (182 aa)) form the tr-type G domain. GTP contacts are provided by residues 93-100 (AHIDHGKS), 158-162 (DTPGH), and 212-215 (NKID).

The protein belongs to the TRAFAC class translation factor GTPase superfamily. Classic translation factor GTPase family. LepA subfamily.

It is found in the plastid. It localises to the chloroplast. The catalysed reaction is GTP + H2O = GDP + phosphate + H(+). Promotes chloroplast protein synthesis. May act as a fidelity factor of the translation reaction, by catalyzing a one-codon backward translocation of tRNAs on improperly translocated ribosomes. This chain is Translation factor GUF1 homolog, chloroplastic, found in Arabidopsis thaliana (Mouse-ear cress).